The sequence spans 209 residues: Nucleoside triphosphate pyrophosphatase (209 aa).

Residue Asp79 is the Proton acceptor of the active site.

It belongs to the Maf family. The cofactor is a divalent metal cation.

It localises to the cytoplasm. It carries out the reaction a ribonucleoside 5'-triphosphate + H2O = a ribonucleoside 5'-phosphate + diphosphate + H(+). The catalysed reaction is a 2'-deoxyribonucleoside 5'-triphosphate + H2O = a 2'-deoxyribonucleoside 5'-phosphate + diphosphate + H(+). In terms of biological role, nucleoside triphosphate pyrophosphatase. May have a dual role in cell division arrest and in preventing the incorporation of modified nucleotides into cellular nucleic acids. The polypeptide is Nucleoside triphosphate pyrophosphatase (Mycolicibacterium vanbaalenii (strain DSM 7251 / JCM 13017 / BCRC 16820 / KCTC 9966 / NRRL B-24157 / PYR-1) (Mycobacterium vanbaalenii)).